Reading from the N-terminus, the 168-residue chain is Thiol peroxidase (168 aa).

Positions 19–168 constitute a Thioredoxin domain; that stretch reads PQAGSKAQTF…YEAALAVLKA (150 aa). Residue Cys61 is the Cysteine sulfenic acid (-SOH) intermediate of the active site. An intrachain disulfide couples Cys61 to Cys95.

This sequence belongs to the peroxiredoxin family. Tpx subfamily. In terms of assembly, homodimer.

It catalyses the reaction a hydroperoxide + [thioredoxin]-dithiol = an alcohol + [thioredoxin]-disulfide + H2O. Functionally, thiol-specific peroxidase that catalyzes the reduction of hydrogen peroxide and organic hydroperoxides to water and alcohols, respectively. Plays a role in cell protection against oxidative stress by detoxifying peroxides. In Shigella dysenteriae, this protein is Thiol peroxidase.